We begin with the raw amino-acid sequence, 353 residues long: Chemerin-like receptor 2 (353 aa).

Topologically, residues 1-41 are extracellular; sequence MEVSREMLFEELDNYSYALEYYSQEPDAEENVYPGIVHWIS. Residue asparagine 14 is glycosylated (N-linked (GlcNAc...) asparagine). A helical membrane pass occupies residues 42–62; sequence LLLYALAFVLGIPGNAIVIWF. The Cytoplasmic portion of the chain corresponds to 63-73; the sequence is MGFKWKKTVTT. A helical transmembrane segment spans residues 74–94; sequence LWFLNLAIADFVFVLFLPLYI. The Extracellular segment spans residues 95-112; the sequence is SYVALSFHWPFGRWLCKL. Cysteine 110 and cysteine 187 are oxidised to a cystine. The helical transmembrane segment at 113–133 threads the bilayer; sequence NSFIAQLNMFSSVFFLTVISL. Residues 134–154 are Cytoplasmic-facing; sequence DRYIHLIHPGLSHPHRTLKNS. Residues 155–175 traverse the membrane as a helical segment; it reads LLVVLFVWLLASLLGGPTLYF. Residues 176 to 210 are Extracellular-facing; it reads RDTVEVNNRIICYNNFQEYELTLMRHHVLTWVKFL. Residues 211–231 form a helical membrane-spanning segment; that stretch reads FGYLLPLLTMSSCYLCLIFKT. Over 232 to 247 the chain is Cytoplasmic; that stretch reads KKQNILISSKHLWMIL. The helical transmembrane segment at 248 to 268 threads the bilayer; that stretch reads SVVIAFMVCWTPFHLFSIWEL. The Extracellular segment spans residues 269–286; it reads SIHHNSSFQNVLQGGIPL. Residues 287–307 traverse the membrane as a helical segment; it reads STGLAFLNSCLNPILYVLISK. The Cytoplasmic portion of the chain corresponds to 308–353; that stretch reads KFQARFRASVAEVLKRSLWEASCSGTVSEQLRSAETKSLSLLETAQ.

Belongs to the chemokine-like receptor (CMKLR) family.

Its subcellular location is the cell membrane. In terms of biological role, receptor for chemoattractant adipokine chemerin/RARRES2 suggesting a role for this receptor in the regulation of inflammation and energy homesotasis. Signals mainly via beta-arrestin pathway. Binding of RARRES2 activates weakly G proteins, calcium mobilization and MAPK1/MAPK3 (ERK1/2) phosphorylation too. Acts also as a receptor for TAFA1, mediates its effects on neuronal stem-cell proliferation and differentiation via the activation of ROCK/ERK and ROCK/STAT3 signaling pathway. This chain is Chemerin-like receptor 2 (Cmklr2), found in Rattus norvegicus (Rat).